A 113-amino-acid polypeptide reads, in one-letter code: MSLLPSRAARVPGPSSSLCALLALLLLTPPGPLVSAGPVAAAVRELRCMCLTVTPGIHPKMISSLQVFAVGPQCSKVEVVPTLKNKKEVCLDPEAPLIKKFIQKTLDSGNKKN.

The first 36 residues, 1 to 36, serve as a signal peptide directing secretion; sequence MSLLPSRAARVPGPSSSLCALLALLLLTPPGPLVSA. 2 disulfide bridges follow: Cys48–Cys74 and Cys50–Cys90.

The protein belongs to the intercrine alpha (chemokine CxC) family.

Its subcellular location is the secreted. Functionally, chemotactic for neutrophil granulocytes. Signals through binding and activation of its receptors (CXCR1 and CXCR2). In addition to its chemotactic and angiogenic properties, it has strong antibacterial activity against Gram-positive and Gram-negative bacteria (90-fold-higher when compared to CXCL5 and CXCL7). The sequence is that of C-X-C motif chemokine 6 (CXCL6) from Equus caballus (Horse).